Reading from the N-terminus, the 289-residue chain is ATP synthase gamma chain (289 aa).

The protein belongs to the ATPase gamma chain family. As to quaternary structure, F-type ATPases have 2 components, CF(1) - the catalytic core - and CF(0) - the membrane proton channel. CF(1) has five subunits: alpha(3), beta(3), gamma(1), delta(1), epsilon(1). CF(0) has three main subunits: a, b and c.

Its subcellular location is the cell membrane. In terms of biological role, produces ATP from ADP in the presence of a proton gradient across the membrane. The gamma chain is believed to be important in regulating ATPase activity and the flow of protons through the CF(0) complex. In Mycoplasmoides gallisepticum (strain R(low / passage 15 / clone 2)) (Mycoplasma gallisepticum), this protein is ATP synthase gamma chain.